The sequence spans 33 residues: Dermaseptin-H8 (33 aa).

At L33 the chain carries Leucine amide.

As to expression, expressed by the skin glands.

Its subcellular location is the secreted. Its function is as follows. Has antimicrobial activity. This is Dermaseptin-H8 from Pithecopus hypochondrialis (Orange-legged leaf frog).